The following is a 385-amino-acid chain: Serpin-Z1 (385 aa).

Residues 317 to 341 are RCL; that stretch reads GAEAAAATADGDCGCSLDFVEPPKK.

It belongs to the serpin family.

Functionally, probable serine protease inhibitor. The protein is Serpin-Z1 of Arabidopsis thaliana (Mouse-ear cress).